Reading from the N-terminus, the 442-residue chain is Proline--tRNA ligase (442 aa).

This sequence belongs to the class-II aminoacyl-tRNA synthetase family. ProS type 2 subfamily. As to quaternary structure, homodimer.

The protein localises to the cytoplasm. It catalyses the reaction tRNA(Pro) + L-proline + ATP = L-prolyl-tRNA(Pro) + AMP + diphosphate. Its function is as follows. Catalyzes the attachment of proline to tRNA(Pro) in a two-step reaction: proline is first activated by ATP to form Pro-AMP and then transferred to the acceptor end of tRNA(Pro). The sequence is that of Proline--tRNA ligase from Brucella ovis (strain ATCC 25840 / 63/290 / NCTC 10512).